We begin with the raw amino-acid sequence, 301 residues long: Dihydroorotate dehydrogenase B (NAD(+)), catalytic subunit (301 aa).

Residues Ser21 and Lys45–Ser46 contribute to the FMN site. Substrate-binding positions include Lys45, Asn69–Leu73, and Asn125. FMN is bound at residue Asn125. Cys128 functions as the Nucleophile in the catalytic mechanism. The FMN site is built by Lys163 and Ile187. Asn188–Thr189 is a substrate binding site. Residues Gly213, Gly239 to Gly240, and Gly261 to Thr262 contribute to the FMN site.

It belongs to the dihydroorotate dehydrogenase family. Type 1 subfamily. In terms of assembly, heterotetramer of 2 PyrK and 2 PyrD type B subunits. FMN serves as cofactor.

The protein localises to the cytoplasm. It catalyses the reaction (S)-dihydroorotate + NAD(+) = orotate + NADH + H(+). It participates in pyrimidine metabolism; UMP biosynthesis via de novo pathway; orotate from (S)-dihydroorotate (NAD(+) route): step 1/1. In terms of biological role, catalyzes the conversion of dihydroorotate to orotate with NAD(+) as electron acceptor. In Thermoplasma volcanium (strain ATCC 51530 / DSM 4299 / JCM 9571 / NBRC 15438 / GSS1), this protein is Dihydroorotate dehydrogenase B (NAD(+)), catalytic subunit (pyrD).